The chain runs to 62 residues: MFPLKKSLLLLFFLGTINLSFCEEERDVDQDERRDDPGERNVQVEKRLLRHVVKILEKYLGK.

Residues methionine 1–cysteine 22 form the signal peptide. A propeptide spanning residues glutamate 23–arginine 47 is cleaved from the precursor. At leucine 60 the chain carries Leucine amide.

This sequence belongs to the frog skin active peptide (FSAP) family. Temporin subfamily. As to expression, expressed by the skin glands.

The protein resides in the secreted. It is found in the target cell membrane. Its function is as follows. Antimicrobial peptide with amphipathic alpha-helical structure that acts against both Gram-positive and Gram-negative bacteria and the fungus Candida albicans. Is active against S.aureus ATCC 25923 (MIC=2.5 ug/ml), S.suis 2 CVCC 606 (MIC=15.6 ug/ml), Salmonella ATCC 20020 (MIC=15.6 ug/ml), P.aeruginosa ATCC 227853 (MIC=60 ug/ml), and C.albicans ATCC10231 (MIC=31.25 ug/ml). Is not active against B.subtilis ADB403, E.coli ATCC 25922, and K.pneumoniae ATCC 700603. Also shows a strong antitumor activity, but no hemolytic activity. The polypeptide is Temporin-La (Aquarana catesbeiana (American bullfrog)).